A 240-amino-acid chain; its full sequence is Adenylate dimethylallyltransferase (240 aa).

Belongs to the isopentenyl transferase family.

It carries out the reaction dimethylallyl diphosphate + AMP = N(6)-(dimethylallyl)adenosine 5'-phosphate + diphosphate. Its function is as follows. Transfers dimethylallyl groups to AMP as part of the biosynthesis of cytokinin phytohormones. The polypeptide is Adenylate dimethylallyltransferase (ipt) (Agrobacterium vitis (Rhizobium vitis)).